Consider the following 318-residue polypeptide: MHSQTTKDEQSKDDSSNEKQDAIERRRLQNRLSQRNHRRKIRDRIAKLQERVIASELRAVATLNGWDQASPPAASMMESKPQGDFDSNPLASVSEDPAISNPPQRNVSSNLCRSCCSLLNQMPSSSSLPSPTSPLPFDLGLTNGVDSTNSSPSTLLNSSPSSSQLSPFSLDTSLSMTGLQSQNEFSFPPYPDPPGSQQYPHCPQYYVATEASLPHIMQRLGSATSHPKAIILIPHGHGYAPAPFTGANAADSTGLRSALNGNLNLQNPGRHCLRPDRSAKSSDLGTSGDWMTAPSSTPFCPLHPSQSSSLDNYQSMML.

Positions 1–27 (MHSQTTKDEQSKDDSSNEKQDAIERRR) are enriched in basic and acidic residues. The disordered stretch occupies residues 1-39 (MHSQTTKDEQSKDDSSNEKQDAIERRRLQNRLSQRNHRR). One can recognise a bZIP domain in the interval 20-52 (QDAIERRRLQNRLSQRNHRRKIRDRIAKLQERV). Residues 25–40 (RRRLQNRLSQRNHRRK) form a basic motif region. A leucine-zipper region spans residues 41-48 (IRDRIAKL). Disordered regions lie at residues 71-107 (PPAA…QRNV), 123-171 (PSSS…FSLD), and 269-318 (GRHC…SMML). Composition is skewed to low complexity over residues 123 to 139 (PSSS…PFDL) and 147 to 171 (STNS…FSLD). Residues 293 to 318 (APSSTPFCPLHPSQSSSLDNYQSMML) show a composition bias toward polar residues.

This sequence belongs to the bZIP family.

The protein localises to the nucleus. Its function is as follows. Transcription regulator that specifically up-regulates the gene cluster that mediates the biosynthesis of the isocyanide xanthocillin and its derivatives. The chain is Xanthocillin biosynthesis cluster transcription factor xanC from Aspergillus fumigatus (strain ATCC MYA-4609 / CBS 101355 / FGSC A1100 / Af293) (Neosartorya fumigata).